We begin with the raw amino-acid sequence, 638 residues long: LIM domain kinase 2 (638 aa).

2 consecutive LIM zinc-binding domains span residues 12 to 63 (CPGC…CPKD) and 72 to 124 (CHGC…CGKC). One can recognise a PDZ domain in the interval 152-239 (LISMPATTEG…TLQLLIEHDP (88 aa)). Threonine 210 bears the Phosphothreonine mark. A disordered region spans residues 279 to 304 (LRRRSLRRSNSISKSPGPSSPKEPLL). Low complexity predominate over residues 286–302 (RSNSISKSPGPSSPKEP). A phosphoserine mark is found at serine 293 and serine 298. Positions 331–608 (LIHGEVLGKG…DSFEALSLYL (278 aa)) constitute a Protein kinase domain. ATP-binding positions include 337-345 (LGKGFFGQA) and lysine 360. Aspartate 451 is a catalytic residue. Threonine 505 bears the Phosphothreonine; by ROCK1 and CDC42BP mark.

The protein belongs to the protein kinase superfamily. TKL Ser/Thr protein kinase family. In terms of assembly, interacts with LIMK2b. As to quaternary structure, interacts with LIMK2a. Binds ROCK1 and MARF1. Interacts with NISCH. Phosphorylated on serine and/or threonine residues by ROCK1.

Its subcellular location is the cytoplasm. It localises to the cytoskeleton. The protein localises to the spindle. The protein resides in the microtubule organizing center. It is found in the centrosome. Its subcellular location is the nucleus. It localises to the perinuclear region. The enzyme catalyses L-seryl-[protein] + ATP = O-phospho-L-seryl-[protein] + ADP + H(+). The catalysed reaction is L-threonyl-[protein] + ATP = O-phospho-L-threonyl-[protein] + ADP + H(+). In terms of biological role, serine/threonine-protein kinase that plays an essential role in the regulation of actin filament dynamics. Acts downstream of several Rho family GTPase signal transduction pathways. Involved in astral microtubule organization and mitotic spindle orientation during early stages of mitosis by mediating phosphorylation of TPPP. Displays serine/threonine-specific phosphorylation of myelin basic protein and histone (MBP) in vitro. Suppresses ciliogenesis via multiple pathways; phosphorylation of CFL1, suppression of directional trafficking of ciliary vesicles to the ciliary base, and by facilitating YAP1 nuclear localization where it acts as a transcriptional corepressor of the TEAD4 target genes AURKA and PLK1. The protein is LIM domain kinase 2 (LIMK2) of Homo sapiens (Human).